The following is a 243-amino-acid chain: Zwei Ig domain protein zig-6 (243 aa).

The signal sequence occupies residues 1-20 (MTKLCLLLLPLVFLVSYSFA). 2 consecutive Ig-like C2-type domains span residues 30-118 (PNAN…MDVI) and 133-212 (GQVL…KTVT). Residues C47 and C102 are joined by a disulfide bond. N-linked (GlcNAc...) asparagine glycosylation is found at N91 and N142. The cysteines at positions 145 and 196 are disulfide-linked.

In terms of tissue distribution, expressed in head and tail body wall muscles.

The protein localises to the secreted. Functionally, probably not involved in maintaining the position of ASI and ASH head neuron cell bodies and ventral nerve cord axons of PVQ, PVP, RMEV, AVK and HSN neurons. In Caenorhabditis elegans, this protein is Zwei Ig domain protein zig-6.